The chain runs to 475 residues: Bifunctional purple acid phosphatase 26 (475 aa).

A signal peptide spans 1–30 (MNHLVIISVFLSSVLLLYRGESGITSSFIR). Asparagine 103 is a glycosylation site (N-linked (GlcNAc...) asparagine). 3 residues coordinate Fe cation: aspartate 162, aspartate 189, and tyrosine 192. A Zn(2+)-binding site is contributed by aspartate 189. Asparagine 227 and histidine 312 together coordinate Zn(2+). Asparagine 227 is a substrate binding site. Histidine 322 (proton donor) is an active-site residue. Position 349 (histidine 349) interacts with Zn(2+). 349–351 (HVH) is a substrate binding site. Histidine 351 serves as a coordination point for Fe cation. N-linked (GlcNAc...) asparagine glycans are attached at residues asparagine 365 and asparagine 422.

This sequence belongs to the metallophosphoesterase superfamily. Purple acid phosphatase family. In terms of assembly, homodimer. Fe cation is required as a cofactor. The cofactor is Zn(2+). Post-translationally, glycosylated. Expressed in roots, stems, leaves, flowers and siliques.

It is found in the vacuole. The catalysed reaction is a phosphate monoester + H2O = an alcohol + phosphate. It catalyses the reaction 2 a phenolic donor + H2O2 = 2 a phenolic radical donor + 2 H2O. With respect to regulation, activated by Mg(2+), Co(2+), Mn(2+) and Ba(2+). Inhibited by Fe(2+), Cu(2+), Zn(2+), NaF, molybdate, arsenate, vanadate and inorganic phosphate. No effect of tartrate, Asp, Gln, glutathione, Asn, ascorbic acid and phosphite. Its function is as follows. Metallo-phosphoesterase involved in phosphate metabolism. Acid phosphatase activity with phosphoenolpyruvate, inorganic pyrophosphate, phenyl-phosphate and p-nitrophenyl-phosphate as the most effective substrates. No activity with phytic acid, phosphocholine or bis-p-nitrophenyl-phosphate. Has a peroxidase activity at alkaline pH. The chain is Bifunctional purple acid phosphatase 26 (PAP26) from Arabidopsis thaliana (Mouse-ear cress).